The following is a 352-amino-acid chain: Carbohydrate sulfotransferase 11 (352 aa).

At 1–16 (MKPALLEVMRMNRICR) the chain is on the cytoplasmic side. The helical; Signal-anchor for type II membrane protein transmembrane segment at 17 to 37 (MVLATCFGSFILVIFYFQSML) threads the bilayer. At 38-352 (HPVMRRNPFG…YSVPNYLKLD (315 aa)) the chain is on the lumenal side. 3'-phosphoadenylyl sulfate-binding positions include 124–130 (PKVACTN) and 186–194 (REPFERLVS). N-linked (GlcNAc...) asparagine glycosylation is found at Asn205, Asn223, Asn321, and Asn342.

This sequence belongs to the sulfotransferase 2 family. N-glycosylated; required for activity and stability. Predominantly expressed in brain and kidney. Also expressed at weaker level in heart, spleen and lung. Expressed in developing chondrocytes.

The protein localises to the golgi apparatus membrane. It catalyses the reaction chondroitin beta-D-glucuronate + n 3'-phosphoadenylyl sulfate = chondroitin 4'-sulfate + n adenosine 3',5'-bisphosphate + n H(+). Functionally, catalyzes the transfer of sulfate to position 4 of the N-acetylgalactosamine (GalNAc) residue of chondroitin. Chondroitin sulfate constitutes the predominant proteoglycan present in cartilage and is distributed on the surfaces of many cells and extracellular matrices. Can also sulfate Gal residues in desulfated dermatan sulfate. Preferentially sulfates in GlcA-&gt;GalNAc unit than in IdoA-&gt;GalNAc unit. Does not form 4, 6-di-O-sulfated GalNAc when chondroitin sulfate C is used as an acceptor. This is Carbohydrate sulfotransferase 11 (Chst11) from Mus musculus (Mouse).